A 360-amino-acid polypeptide reads, in one-letter code: Phospho-N-acetylmuramoyl-pentapeptide-transferase (360 aa).

10 consecutive transmembrane segments (helical) span residues 25–45 (RAIL…PWVI), 74–94 (MGGA…SDFG), 97–117 (YVWV…VDDY), 134–154 (YFWQ…TAQA), 168–188 (VALN…VGTS), 199–219 (GLAI…AYLA), 236–256 (AGEL…FLWF), 263–283 (VFMG…VAVI), 288–308 (FVLF…ILQV), and 339–359 (IVRF…TLKF).

The protein belongs to the glycosyltransferase 4 family. MraY subfamily. Requires Mg(2+) as cofactor.

Its subcellular location is the cell inner membrane. It carries out the reaction UDP-N-acetyl-alpha-D-muramoyl-L-alanyl-gamma-D-glutamyl-meso-2,6-diaminopimeloyl-D-alanyl-D-alanine + di-trans,octa-cis-undecaprenyl phosphate = di-trans,octa-cis-undecaprenyl diphospho-N-acetyl-alpha-D-muramoyl-L-alanyl-D-glutamyl-meso-2,6-diaminopimeloyl-D-alanyl-D-alanine + UMP. Its pathway is cell wall biogenesis; peptidoglycan biosynthesis. In terms of biological role, catalyzes the initial step of the lipid cycle reactions in the biosynthesis of the cell wall peptidoglycan: transfers peptidoglycan precursor phospho-MurNAc-pentapeptide from UDP-MurNAc-pentapeptide onto the lipid carrier undecaprenyl phosphate, yielding undecaprenyl-pyrophosphoryl-MurNAc-pentapeptide, known as lipid I. In Cellvibrio japonicus (strain Ueda107) (Pseudomonas fluorescens subsp. cellulosa), this protein is Phospho-N-acetylmuramoyl-pentapeptide-transferase.